The sequence spans 126 residues: Small ribosomal subunit protein uS11 (126 aa).

This sequence belongs to the universal ribosomal protein uS11 family. In terms of assembly, part of the 30S ribosomal subunit.

In terms of biological role, located on the platform of the 30S subunit. The polypeptide is Small ribosomal subunit protein uS11 (Methanosarcina acetivorans (strain ATCC 35395 / DSM 2834 / JCM 12185 / C2A)).